The sequence spans 746 residues: Double-stranded RNA-specific editase B2 (746 aa).

Disordered regions lie at residues 1–36 and 50–105; these read MASVLGSGRGSGGLSSQLKCKSKRRRRRRSKRKDKV and SPGT…PLEE. Residues 20-34 show a composition bias toward basic residues; that stretch reads CKSKRRRRRRSKRKD. Residues 23-35 are R-domain (ssRNA-binding); the sequence is KRRRRRRSKRKDK. DRBM domains lie at 126–192 and 284–348; these read TPKN…SFVQ and NPVV…ALFD. The A to I editase domain maps to 415-742; the sequence is VLSSGTKCIS…VRKPPEQDQF (328 aa). Zn(2+) is bound at residue His-439. The active-site Proton donor is Glu-441. Zn(2+)-binding residues include Cys-497 and Cys-562.

Brain specific.

It is found in the nucleus. Lacks editing activity. It prevents the binding of other ADAR enzymes to targets in vitro, and decreases the efficiency of these enzymes. Capable of binding to dsRNA but also to ssRNA. This Rattus norvegicus (Rat) protein is Double-stranded RNA-specific editase B2 (Adarb2).